The primary structure comprises 434 residues: Probable exopolygalacturonase X (434 aa).

The signal sequence occupies residues 1–23 (MKFLHTVAQTATLLLSLGASVEG). Residues 35 to 54 (HHPFRPLPASTPRTKTCHVR) are disordered. N-linked (GlcNAc...) asparagine glycans are attached at residues N113, N129, and N199. Residues 231-252 (SSNIVIQNSVVNNGDDCVSFKP) form a PbH1 1 repeat. The Proton donor role is filled by D245. A disulfide bond links C247 and C264. N-linked (GlcNAc...) asparagine glycosylation is found at N253 and N265. One copy of the PbH1 2 repeat lies at 254–274 (STDILVQNMHCNGSHGISVGS). H268 is an active-site residue. N-linked (GlcNAc...) asparagine glycosylation is found at N292, N297, N329, N354, and N364. Residues 327-348 (VSNITYDRMYIENVDWAIEVTQ) form a PbH1 3 repeat. A PbH1 4 repeat occupies 362–394 (PSNLTISDVHIKNMWGTTSGKRDPNVGTIVCSS). C392 and C398 are disulfide-bonded. 2 N-linked (GlcNAc...) asparagine glycosylation sites follow: N407 and N430.

Belongs to the glycosyl hydrolase 28 family.

Its subcellular location is the secreted. It carries out the reaction [(1-&gt;4)-alpha-D-galacturonosyl](n) + H2O = alpha-D-galacturonate + [(1-&gt;4)-alpha-D-galacturonosyl](n-1). Specific in hydrolyzing the terminal glycosidic bond of polygalacturonic acid and oligogalacturonates. In Aspergillus terreus (strain NIH 2624 / FGSC A1156), this protein is Probable exopolygalacturonase X (pgaX).